A 265-amino-acid chain; its full sequence is MSDILNTILARKADEIAERSARVPLAELVARSADLPLTRGFAAAMKASIAAGEPAVIAEVKKASPSKGVIRPDFHPADIAVSYEFGGASCLSVLTDMYFFQGSDAYLQQAREACTLPVLRKDFTVDPYQVYEARVLGADCILLIVSALEDQQLADLSGLAMQLGLDVLVEVHDIDELERAVQVPVPLVGINNRNLRTFEVSLQTTLDMRAAVPRDRVLVTESGIVTASDVQLMRSNGVNAFLVGETFMRAPEPGEALRQLFFAHD.

It belongs to the TrpC family.

The catalysed reaction is 1-(2-carboxyphenylamino)-1-deoxy-D-ribulose 5-phosphate + H(+) = (1S,2R)-1-C-(indol-3-yl)glycerol 3-phosphate + CO2 + H2O. It functions in the pathway amino-acid biosynthesis; L-tryptophan biosynthesis; L-tryptophan from chorismate: step 4/5. In Xanthomonas campestris pv. campestris (strain 8004), this protein is Indole-3-glycerol phosphate synthase.